Reading from the N-terminus, the 225-residue chain is MEHSRIKKRNVALIEKCVMSSIGIESLFRKFAGNPYKLHTYTSQESFQDAMSRISFAAVIFSFSAMRSERREGLSCLTELAIKFPRTRRLVIADDDIEARLIGSLSPSPLDGVLSKASTLEIFHQELFLSLNGVRQATDRLNNQWYINQSRTLSPTEREILRFMSRGYSMTQIAEQLKRNIKTIRAHKFNVMSKLGVSSDAGLLEAADILLCMRHCETSNVLHPY.

An HTH luxR-type domain is found at 146–211 (YINQSRTLSP…GLLEAADILL (66 aa)). The H-T-H motif DNA-binding region spans 170-189 (MTQIAEQLKRNIKTIRAHKF).

Forms a complex with RcsB; genetically both BglJ and RcsB are required to relieve bgl operon repression by H-NS and by StpA.

Functionally, a crytic transcriptional activator. When its expression is induced it relieves H-NS repression of the bgl operon. Acts independently of transcription factor LeuO. This is Transcriptional activator protein BglJ (bglJ) from Escherichia coli (strain K12).